We begin with the raw amino-acid sequence, 169 residues long: MERAIFAGGCFWCMVQPFEEQAGILSVRSGYTGGHLPNPSYEQVCAKTTGHTEAVEIIFDPKQIAYKDLVELYWTQTDPTDAFGQFEDRGDNYRPVIYYTTERQKEIAEQSKANLQASGRFDQPIVTTIEPAEPFYLAEDYHQGFYKKNPKRYAQSSAIRHQFLEENWS.

The active site involves Cys-10.

The protein belongs to the MsrA Met sulfoxide reductase family.

The enzyme catalyses L-methionyl-[protein] + [thioredoxin]-disulfide + H2O = L-methionyl-(S)-S-oxide-[protein] + [thioredoxin]-dithiol. The catalysed reaction is [thioredoxin]-disulfide + L-methionine + H2O = L-methionine (S)-S-oxide + [thioredoxin]-dithiol. In terms of biological role, has an important function as a repair enzyme for proteins that have been inactivated by oxidation. Catalyzes the reversible oxidation-reduction of methionine sulfoxide in proteins to methionine. The protein is Peptide methionine sulfoxide reductase MsrA of Streptococcus pyogenes serotype M1.